The following is a 552-amino-acid chain: Non-structural protein NS1 (552 aa).

This sequence belongs to the orbivirus non-structural protein NS1 family.

The polypeptide is Non-structural protein NS1 (Segment-5) (Antilocapra americana (Pronghorn)).